A 716-amino-acid polypeptide reads, in one-letter code: 1,4-alpha-glucan branching enzyme GlgB (716 aa).

The active-site Nucleophile is aspartate 394. Residue glutamate 447 is the Proton donor of the active site.

The protein belongs to the glycosyl hydrolase 13 family. GlgB subfamily. As to quaternary structure, monomer.

The catalysed reaction is Transfers a segment of a (1-&gt;4)-alpha-D-glucan chain to a primary hydroxy group in a similar glucan chain.. It functions in the pathway glycan biosynthesis; glycogen biosynthesis. Catalyzes the formation of the alpha-1,6-glucosidic linkages in glycogen by scission of a 1,4-alpha-linked oligosaccharide from growing alpha-1,4-glucan chains and the subsequent attachment of the oligosaccharide to the alpha-1,6 position. The polypeptide is 1,4-alpha-glucan branching enzyme GlgB (Photobacterium profundum (strain SS9)).